The chain runs to 70 residues: Protein SlyX homolog (70 aa).

It belongs to the SlyX family.

This is Protein SlyX homolog from Shewanella baltica (strain OS155 / ATCC BAA-1091).